The following is a 763-amino-acid chain: Heat shock 70 kDa protein 16 (763 aa).

Disordered regions lie at residues 509 to 529 and 701 to 763; these read ISEE…PSSG and EKTT…MELD. At serine 528 the chain carries Phosphoserine. Basic and acidic residues predominate over residues 701-714; it reads EKTTEQESLPKDAN.

The protein belongs to the heat shock protein 70 (TC 1.A.33) family. HSP110/SSE subfamily.

This is Heat shock 70 kDa protein 16 (HSP70-16) from Arabidopsis thaliana (Mouse-ear cress).